Here is a 558-residue protein sequence, read N- to C-terminus: Factor VII-activating protease (558 aa).

Positions 1–23 (MFVRMLVFRVLLLIALVGKSVIG) are cleaved as a signal peptide. EGF-like domains lie at 71–107 (DDDPCQSNPCEHGGDCIIRGDTFSCSCPAPFSGSRCQ), 109–146 (AQNKCKDNPCVHGDCLITQKHPYYRCACKYPYTGPDCS), and 148–186 (VLPACRPNPCQNGGVCSRHRRRSRFTCACPDQYKGKFCE). Disulfide bonds link Cys75-Cys86, Cys80-Cys95, Cys97-Cys106, Cys113-Cys123, Cys118-Cys134, Cys136-Cys145, Cys152-Cys163, Cys157-Cys174, Cys176-Cys185, Cys192-Cys274, Cys213-Cys255, Cys244-Cys269, Cys299-Cys433, Cys345-Cys361, Cys353-Cys422, Cys445-Cys513, Cys475-Cys491, and Cys503-Cys531. The 84-residue stretch at 191–274 (DCYVGDGYSY…KWEYCDVTVC (84 aa)) folds into the Kringle domain. Residues 312–553 (IYGGFKSTAG…FLNWIKTTMH (242 aa)) form the Peptidase S1 domain. Residues His360 and Asp409 each act as charge relay system in the active site. Ser507 functions as the Charge relay system in the catalytic mechanism.

The protein belongs to the peptidase S1 family. In terms of assembly, heterodimer; disulfide-linked. Heterodimer of a 50 kDa heavy and a 27 kDa light chain linked by a disulfide bond. Post-translationally, proteolytic cleavage at Gly-23 or Met-27 can give rise to the 50 kDa heavy chain (HC) and cleavage at Arg-311 or Lys-317 can give rise to the 27 kDa light chain (LC). The HC can undergo further proteolytic cleavage giving rise to a 26 kDa fragment. The LC can undergo further proteolytic cleavage at Arg-311 leading to a 17-kDa fragment and at Arg-478 leading to a 8-kDa fragment. Liver and kidney.

It is found in the secreted. In terms of biological role, cleaves the alpha-chain at multiple sites and the beta-chain between 'Lys-53' and 'Lys-54' but not the gamma-chain of fibrinogen and therefore does not initiate the formation of the fibrin clot and does not cause the fibrinolysis directly. It does not cleave (activate) prothrombin and plasminogen but converts the inactive single chain urinary plasminogen activator (pro-urokinase) to the active two chain form. Activates coagulation factor VII. May function as a tumor suppressor negatively regulating cell proliferation and cell migration. The sequence is that of Factor VII-activating protease from Mus musculus (Mouse).